The following is a 148-amino-acid chain: Large ribosomal subunit protein bL9 (148 aa).

Belongs to the bacterial ribosomal protein bL9 family.

Binds to the 23S rRNA. This chain is Large ribosomal subunit protein bL9, found in Listeria monocytogenes serotype 4a (strain HCC23).